The chain runs to 291 residues: Elongation factor Ts (291 aa).

Residues 79–82 (TDFV) form an involved in Mg(2+) ion dislocation from EF-Tu region.

The protein belongs to the EF-Ts family.

Its subcellular location is the cytoplasm. In terms of biological role, associates with the EF-Tu.GDP complex and induces the exchange of GDP to GTP. It remains bound to the aminoacyl-tRNA.EF-Tu.GTP complex up to the GTP hydrolysis stage on the ribosome. This chain is Elongation factor Ts, found in Anaplasma marginale (strain Florida).